Here is a 423-residue protein sequence, read N- to C-terminus: Glucose-1-phosphate adenylyltransferase (423 aa).

Alpha-D-glucose 1-phosphate is bound by residues Tyr98, Gly163, 178 to 179 (EK), and Ser189.

Belongs to the bacterial/plant glucose-1-phosphate adenylyltransferase family. As to quaternary structure, homotetramer.

The enzyme catalyses alpha-D-glucose 1-phosphate + ATP + H(+) = ADP-alpha-D-glucose + diphosphate. It participates in glycan biosynthesis; glycogen biosynthesis. Its function is as follows. Involved in the biosynthesis of ADP-glucose, a building block required for the elongation reactions to produce glycogen. Catalyzes the reaction between ATP and alpha-D-glucose 1-phosphate (G1P) to produce pyrophosphate and ADP-Glc. The sequence is that of Glucose-1-phosphate adenylyltransferase from Thermotoga neapolitana (strain ATCC 49049 / DSM 4359 / NBRC 107923 / NS-E).